We begin with the raw amino-acid sequence, 151 residues long: Protein A151R (151 aa).

This sequence belongs to the asfivirus A151R family. Monomer. Homodimer. Interacts with protein B119L. Interacts with membrane protein E248R. Requires Zn(2+) as cofactor.

May participate in a redox cascade for the formation of disulfide bonds in viral proteins. In Ornithodoros (relapsing fever ticks), this protein is Protein A151R.